The chain runs to 133 residues: Ribosome-binding factor A (133 aa).

Belongs to the RbfA family. In terms of assembly, monomer. Binds 30S ribosomal subunits, but not 50S ribosomal subunits or 70S ribosomes.

The protein localises to the cytoplasm. One of several proteins that assist in the late maturation steps of the functional core of the 30S ribosomal subunit. Associates with free 30S ribosomal subunits (but not with 30S subunits that are part of 70S ribosomes or polysomes). Required for efficient processing of 16S rRNA. May interact with the 5'-terminal helix region of 16S rRNA. The polypeptide is Ribosome-binding factor A (Shigella boydii serotype 18 (strain CDC 3083-94 / BS512)).